A 394-amino-acid polypeptide reads, in one-letter code: Guanine nucleotide-binding protein G(s) subunit alpha (394 aa).

The segment at 1-23 (MGCLGNSKTEDQRNEEKAQREAN) is disordered. Residue Gly2 is the site of N-palmitoyl glycine attachment. Cys3 carries the S-palmitoyl cysteine lipid modification. The span at 8–23 (KTEDQRNEEKAQREAN) shows a compositional bias: basic and acidic residues. A G-alpha domain is found at 39 to 394 (ATHRLLLLGA…RMHLRQYELL (356 aa)). Residues 42–55 (RLLLLGAGESGKST) form a G1 motif region. GTP is bound at residue 47 to 55 (GAGESGKST). Position 54 (Ser54) interacts with Mg(2+). A disordered region spans residues 68–91 (FNGEGGEEDPQAARSNSDGEKATK). Residues 196 to 204 (DLLRCRVLT) form a G2 motif region. Residues 197 to 204 (LLRCRVLT), 223 to 227 (DVGGQ), 292 to 295 (NKQD), and Ala366 contribute to the GTP site. Residue Thr204 participates in Mg(2+) binding. Residues 219-228 (FHMFDVGGQR) are G3 motif. Positions 288–295 (ILFLNKQD) are G4 motif. A G5 motif region spans residues 364–369 (TCAVDT).

Belongs to the G-alpha family. G(s) subfamily. As to quaternary structure, heterotrimeric G proteins are composed of 3 units; alpha, beta and gamma. The alpha chain contains the guanine nucleotide binding site. Interacts with CRY1; the interaction may block GPCR-mediated regulation of cAMP concentrations. Interacts with ADCY6 and stimulates its adenylyl cyclase activity. Interacts with ADCY2 and ADCY5. Stimulates the ADCY5 adenylyl cyclase activity. Interaction with SASH1.

The protein resides in the cell membrane. Functionally, guanine nucleotide-binding proteins (G proteins) function as transducers in numerous signaling pathways controlled by G protein-coupled receptors (GPCRs). Signaling involves the activation of adenylyl cyclases, resulting in increased levels of the signaling molecule cAMP. GNAS functions downstream of several GPCRs, including beta-adrenergic receptors. Stimulates the Ras signaling pathway via RAPGEF2. This Canis lupus familiaris (Dog) protein is Guanine nucleotide-binding protein G(s) subunit alpha (GNAS).